Here is a 1129-residue protein sequence, read N- to C-terminus: Protein DWARF 53-LIKE (1129 aa).

A Clp R domain is found at 8-180 (ARQCLSPAAV…KLAILRPAPP (173 aa)). Repeat stretches follow at residues 12–85 (LSPA…LDRL) and 102–180 (VSNS…PAPP). Residues 519 to 573 (RYIGVPADKERSANPSKGSESIGVQKDVIKPCAVSAVHSSSTARPISSPSVTNKR) form a disordered region. The segment covering 557–568 (SSSTARPISSPS) has biased composition (low complexity). Residues 577–581 (LVLNL) carry the EAR 1 motif. The disordered stretch occupies residues 587 to 654 (KSDENLQERG…KRVEDSERSV (68 aa)). Over residues 596-608 (GMQSQHGTLSNAD) the composition is skewed to polar residues. Over residues 645 to 654 (KRVEDSERSV) the composition is skewed to basic and acidic residues. 2 short sequence motifs (EAR) span residues 798-802 (LDLNL) and 975-980 (FDLNLP). The segment at 975 to 1001 (FDLNLPVDEDEPFDADDDSSSHENSYG) is disordered. Positions 981–992 (VDEDEPFDADDD) are enriched in acidic residues.

The protein belongs to the ClpA/ClpB family. In terms of processing, polyubiquitinated. Strigolactone, but not karrikin, triggers rapid SCF(D3)-dependent degradation via the proteasome.

Functionally, repressor of strigolactones (SL) signaling. Subjected to a negative feedback control of SL signaling. This is Protein DWARF 53-LIKE from Oryza sativa subsp. japonica (Rice).